The following is a 286-amino-acid chain: Oxidoreductase clz15 (286 aa).

This sequence belongs to the asaB hydroxylase/desaturase family.

It functions in the pathway secondary metabolite biosynthesis. Oxidoreductase; part of the gene cluster that mediates the biosynthesis of squalestatin S1 (SQS1, also known as zaragozic acid A), a heavily oxidized fungal polyketide that offers potent cholesterol lowering activity by targeting squalene synthase (SS). SQS1 is composed of a 2,8-dioxobicyclic[3.2.1]octane-3,4,5-tricarboxyclic acid core that is connected to two lipophilic polyketide arms. These initial steps feature the priming of an unusual benzoic acid starter unit onto the highly reducing polyketide synthase clz14, followed by oxaloacetate extension and product release to generate a tricarboxylic acid containing product. The phenylalanine ammonia lyase (PAL) clz10 and the acyl-CoA ligase clz12 are involved in transforming phenylalanine into benzoyl-CoA. The citrate synthase-like protein clz17 is involved in connecting the C-alpha-carbons of the hexaketide chain and oxaloacetate to afford the tricarboxylic acid unit. The potential hydrolytic enzymes, clz11 and clz13, are in close proximity to pks2 and may participate in product release. On the other side, the tetraketide arm is synthesized by a the squalestatin tetraketide synthase clz2 and enzymatically esterified to the core in the last biosynthetic step, by the acetyltransferase clz6. The biosynthesis of the tetraketide must involve 3 rounds of chain extension. After the first and second rounds methyl-transfer occurs, and in all rounds of extension the ketoreductase and dehydratase are active. The enoyl reductase and C-MeT of clz2 are not active in the final round of extension. The acetyltransferase clz6 appears to have a broad substrate selectivity for its acyl CoA substrate, allowing the in vitro synthesis of novel squalestatins. The biosynthesis of SQS1 requires several oxidative steps likely performed by oxidoreductases clz3, clz15 and clz16. Finally, in support of the identification of the cluster as being responsible for SQS1 production, the cluster contains a gene encoding a putative squalene synthase (SS) clz20, suggesting a likely mechanism for self-resistance. This is Oxidoreductase clz15 from Cochliobolus lunatus (Filamentous fungus).